The primary structure comprises 296 residues: GTPase Era (296 aa).

An Era-type G domain is found at 2–171; that stretch reads KAGFIAVVGR…LEALDPYLED (170 aa). The interval 10–17 is G1; that stretch reads GRPNVGKS. 10–17 provides a ligand contact to GTP; that stretch reads GRPNVGKS. The tract at residues 36 to 40 is G2; it reads GTTRD. The G3 stretch occupies residues 57-60; sequence DTPG. GTP-binding positions include 57 to 61 and 120 to 123; these read DTPGI and NKVD. Residues 120 to 123 are G4; the sequence is NKVD. The interval 150–152 is G5; sequence ASG. Positions 202–279 constitute a KH type-2 domain; that stretch reads TRDEIPHSVA…YLGLWVKVKD (78 aa).

The protein belongs to the TRAFAC class TrmE-Era-EngA-EngB-Septin-like GTPase superfamily. Era GTPase family. In terms of assembly, monomer.

Its subcellular location is the cytoplasm. It localises to the cell inner membrane. An essential GTPase that binds both GDP and GTP, with rapid nucleotide exchange. Plays a role in 16S rRNA processing and 30S ribosomal subunit biogenesis and possibly also in cell cycle regulation and energy metabolism. The chain is GTPase Era from Fusobacterium nucleatum subsp. nucleatum (strain ATCC 25586 / DSM 15643 / BCRC 10681 / CIP 101130 / JCM 8532 / KCTC 2640 / LMG 13131 / VPI 4355).